The primary structure comprises 347 residues: MATTTQHMNQIFLVLLLISFAISPAISTVPKECETDSTDSCIDKTKALPLKIVAIVAILVTSMIGVAAPLFSRYVTFLHPDGKIFMIIKCFASGIILGTGFMHVLPDSFEMLSSPCLEDNPWHKFPFTGFVAMLSGLVTLAIDSIATSLYTKKAVADDSEERTTPMIIQIDHLPLTTKERSSTCSKQLLRYRVIATVLELGIIVHSVVIGLSLGATNDTCTIKGLIAALCFHQMFEGMGLGGCILQAEYTNVKKFVMAFFFAVTTPSGIALGIALSSVYKDNSPTALITVGLLNACSAGLLIYMALVDLLAAEFMGSMLQRSVKLQLNCFGAALLGCGGMSVLAKWA.

The first 27 residues, 1–27 (MATTTQHMNQIFLVLLLISFAISPAIS), serve as a signal peptide directing secretion. The Extracellular portion of the chain corresponds to 28-51 (TVPKECETDSTDSCIDKTKALPLK). A helical membrane pass occupies residues 52–72 (IVAIVAILVTSMIGVAAPLFS). Topologically, residues 73 to 83 (RYVTFLHPDGK) are cytoplasmic. A helical membrane pass occupies residues 84 to 104 (IFMIIKCFASGIILGTGFMHV). Residues 105–124 (LPDSFEMLSSPCLEDNPWHK) lie on the Extracellular side of the membrane. Residues 125 to 145 (FPFTGFVAMLSGLVTLAIDSI) form a helical membrane-spanning segment. Over 146-192 (ATSLYTKKAVADDSEERTTPMIIQIDHLPLTTKERSSTCSKQLLRYR) the chain is Cytoplasmic. The helical transmembrane segment at 193–213 (VIATVLELGIIVHSVVIGLSL) threads the bilayer. At 214–224 (GATNDTCTIKG) the chain is on the extracellular side. A helical transmembrane segment spans residues 225-245 (LIAALCFHQMFEGMGLGGCIL). Residues 246–254 (QAEYTNVKK) lie on the Cytoplasmic side of the membrane. A helical membrane pass occupies residues 255 to 275 (FVMAFFFAVTTPSGIALGIAL). At 276–286 (SSVYKDNSPTA) the chain is on the extracellular side. Residues 287–307 (LITVGLLNACSAGLLIYMALV) form a helical membrane-spanning segment. The Cytoplasmic portion of the chain corresponds to 308-326 (DLLAAEFMGSMLQRSVKLQ). The chain crosses the membrane as a helical span at residues 327 to 347 (LNCFGAALLGCGGMSVLAKWA).

This sequence belongs to the ZIP transporter (TC 2.A.5) family.

It is found in the cell membrane. In terms of biological role, probably mediates zinc uptake from the rhizosphere. The protein is Probable zinc transporter 8 (ZIP8) of Arabidopsis thaliana (Mouse-ear cress).